The chain runs to 150 residues: Protein-export protein SecB (150 aa).

This sequence belongs to the SecB family. As to quaternary structure, homotetramer, a dimer of dimers. One homotetramer interacts with 1 SecA dimer.

It is found in the cytoplasm. In terms of biological role, one of the proteins required for the normal export of preproteins out of the cell cytoplasm. It is a molecular chaperone that binds to a subset of precursor proteins, maintaining them in a translocation-competent state. It also specifically binds to its receptor SecA. In Acidovorax ebreus (strain TPSY) (Diaphorobacter sp. (strain TPSY)), this protein is Protein-export protein SecB.